The chain runs to 679 residues: Methionine--tRNA ligase (679 aa).

A 'HIGH' region motif is present at residues 14 to 24 (PYANGSIHLGH). Zn(2+) contacts are provided by cysteine 145, cysteine 148, cysteine 158, and cysteine 161. A 'KMSKS' region motif is present at residues 331–335 (KMSKS). ATP is bound at residue lysine 334. The region spanning 577–679 (TFAAVDLRVA…SGAKPGQRIK (103 aa)) is the tRNA-binding domain.

It belongs to the class-I aminoacyl-tRNA synthetase family. MetG type 1 subfamily. Homodimer. Requires Zn(2+) as cofactor.

It is found in the cytoplasm. It catalyses the reaction tRNA(Met) + L-methionine + ATP = L-methionyl-tRNA(Met) + AMP + diphosphate. Its function is as follows. Is required not only for elongation of protein synthesis but also for the initiation of all mRNA translation through initiator tRNA(fMet) aminoacylation. This Pseudomonas putida (strain ATCC 47054 / DSM 6125 / CFBP 8728 / NCIMB 11950 / KT2440) protein is Methionine--tRNA ligase.